Reading from the N-terminus, the 453-residue chain is DNA repair protein RadA (453 aa).

The C4-type zinc-finger motif lies at 10–27 (CQECGYQSPKYLGRCPNC). Residue 95-102 (GDPGIGKS) participates in ATP binding. A RadA KNRFG motif motif is present at residues 251–255 (KNRFG). The tract at residues 350-453 (DAYLKSAGGV…VGQVLKAVFS (104 aa)) is lon-protease-like.

The protein belongs to the RecA family. RadA subfamily.

In terms of biological role, DNA-dependent ATPase involved in processing of recombination intermediates, plays a role in repairing DNA breaks. Stimulates the branch migration of RecA-mediated strand transfer reactions, allowing the 3' invading strand to extend heteroduplex DNA faster. Binds ssDNA in the presence of ADP but not other nucleotides, has ATPase activity that is stimulated by ssDNA and various branched DNA structures, but inhibited by SSB. Does not have RecA's homology-searching function. The sequence is that of DNA repair protein RadA from Streptococcus pyogenes serotype M6 (strain ATCC BAA-946 / MGAS10394).